Here is a 3256-residue protein sequence, read N- to C-terminus: Proliferation marker protein Ki-67 (3256 aa).

The 50-residue stretch at C27–I76 folds into the FHA domain. The interval S101 to I199 is disordered. Over residues K107–R122 the composition is skewed to basic and acidic residues. Phosphoserine is present on residues S125, S128, and S166. Residues N161–D173 are compositionally biased toward basic and acidic residues. A compositionally biased stretch (polar residues) spans S174–H183. Residue K245 forms a Glycyl lysine isopeptide (Lys-Gly) (interchain with G-Cter in SUMO2) linkage. Phosphoserine occurs at positions 264, 296, and 308. Disordered stretches follow at residues A271–I426 and R513–H542. Basic and acidic residues predominate over residues D314–E324. Residues T328 and T347 each carry the phosphothreonine modification. Over residues V349–P358 the composition is skewed to polar residues. Phosphoserine is present on residues S352, S357, and S374. At T401 the chain carries Phosphothreonine. S411 is modified (phosphoserine). The span at K414–S425 shows a compositional bias: polar residues. The segment at E495 to K678 is positively charged patch (CP). The region spanning K502–K549 is the PP1-binding domain. S538 bears the Phosphoserine mark. T543 is subject to Phosphothreonine. The interval S575–S632 is disordered. A phosphoserine mark is found at S579 and S584. The segment covering P603 to E612 has biased composition (polar residues). Phosphoserine is present on S648. The tract at residues T674–S707 is disordered. The span at V676–T694 shows a compositional bias: basic residues. T761 is modified (phosphothreonine). A disordered region spans residues S853–K886. Position 859 is a phosphoserine (S859). Polar residues predominate over residues S866 to R882. The 16 X 122 AA approximate repeats stretch occupies residues G1000–P2928. K167R repeat units follow at residues K1001–P1112, K1123–P1234, K1245–P1356, K1367–P1477, K1488–T1597, and K1609–P1720. T1017 carries the post-translational modification Phosphothreonine. Glycyl lysine isopeptide (Lys-Gly) (interchain with G-Cter in SUMO2) cross-links involve residues K1022 and K1035. Residues T1045–K1073 form a disordered region. The span at T1052–P1072 shows a compositional bias: basic and acidic residues. Position 1071 is a phosphoserine (S1071). T1091 carries the phosphothreonine modification. A Glycyl lysine isopeptide (Lys-Gly) (interchain with G-Cter in SUMO1); alternate cross-link involves residue K1093. K1093 is covalently cross-linked (Glycyl lysine isopeptide (Lys-Gly) (interchain with G-Cter in SUMO2); alternate). Residue S1098 is modified to Phosphoserine. The tract at residues F1109–L1151 is disordered. The residue at position 1111 (T1111) is a Phosphothreonine. Residue S1131 is modified to Phosphoserine. T1139 is modified (phosphothreonine). A Phosphoserine modification is found at S1142. At T1167 the chain carries Phosphothreonine. A Phosphoserine modification is found at S1169. Phosphothreonine is present on T1176. Residues K1185 and K1188 each participate in a glycyl lysine isopeptide (Lys-Gly) (interchain with G-Cter in SUMO2) cross-link. T1193 is modified (phosphothreonine). S1207 carries the phosphoserine modification. T1233 carries the phosphothreonine modification. The interval T1246–A1276 is disordered. Phosphoserine occurs at positions 1253 and 1256. Residues S1253–K1266 show a composition bias toward polar residues. 4 positions are modified to phosphothreonine: T1261, T1298, T1315, and T1327. The interval T1323–V1518 is disordered. Phosphoserine is present on S1329. T1335 bears the Phosphothreonine mark. A Glycyl lysine isopeptide (Lys-Gly) (interchain with G-Cter in SUMO2) cross-link involves residue K1337. Position 1355 is a phosphothreonine (T1355). At S1376 the chain carries Phosphoserine. The residue at position 1383 (T1383) is a Phosphothreonine. A Phosphoserine modification is found at S1386. 2 stretches are compositionally biased toward basic and acidic residues: residues P1394–A1406 and T1418–L1442. T1420 and T1437 each carry phosphothreonine. At S1496 the chain carries Phosphoserine. The residue at position 1503 (T1503) is a Phosphothreonine. S1506 is modified (phosphoserine). T1540 is subject to Phosphothreonine. Position 1552 is a phosphotyrosine (Y1552). Phosphothreonine occurs at positions 1557 and 1569. Phosphoserine occurs at positions 1571 and 1617. Positions T1597–A1675 are disordered. At K1639 the chain carries N6-acetyllysine. A Glycyl lysine isopeptide (Lys-Gly) (interchain with G-Cter in SUMO2) cross-link involves residue K1643. Residues T1660 to S1672 are compositionally biased toward basic and acidic residues. Phosphoserine occurs at positions 1679 and 1689. Disordered stretches follow at residues S1689–E1708, F1717–E1765, F1771–G1790, T1801–E1824, and F1839–V1886. A Glycyl lysine isopeptide (Lys-Gly) (interchain with G-Cter in SUMO2) cross-link involves residue K1703. A Phosphothreonine modification is found at T1719. S1721 is modified (phosphoserine). Over residues H1722–T1733 the composition is skewed to basic and acidic residues. 5 K167R repeats span residues K1731–P1842, T1854–P1964, K1975–P2086, K2097–P2204, and K2215–P2326. S1740 carries the phosphoserine modification. 4 positions are modified to phosphothreonine: T1747, T1764, T1784, and T1801. S1815 carries the post-translational modification Phosphoserine. Phosphothreonine is present on T1841. Phosphoserine occurs at positions 1861 and 1864. A compositionally biased stretch (polar residues) spans S1861–K1874. Phosphothreonine occurs at positions 1869, 1897, 1906, and 1923. Residue S1937 is modified to Phosphoserine. The segment at F1961–S2002 is disordered. T1963 is subject to Phosphothreonine. Over residues H1966–T1977 the composition is skewed to basic and acidic residues. S1983 carries the phosphoserine modification. K2005 is modified (N6-acetyllysine). A Glycyl lysine isopeptide (Lys-Gly) (interchain with G-Cter in SUMO1); alternate cross-link involves residue K2009. K2009 participates in a covalent cross-link: Glycyl lysine isopeptide (Lys-Gly) (interchain with G-Cter in SUMO2); alternate. Residues K2017–E2192 form a disordered region. A phosphothreonine mark is found at T2028 and T2065. Composition is skewed to basic and acidic residues over residues T2028 to A2046 and R2061 to A2070. K2067 is covalently cross-linked (Glycyl lysine isopeptide (Lys-Gly) (interchain with G-Cter in SUMO1); alternate). K2067 is covalently cross-linked (Glycyl lysine isopeptide (Lys-Gly) (interchain with G-Cter in SUMO2); alternate). The residue at position 2072 (S2072) is a Phosphoserine. Phosphothreonine is present on T2085. A compositionally biased stretch (basic and acidic residues) spans D2087–T2099. At S2105 the chain carries Phosphoserine. Residue T2113 is modified to Phosphothreonine. A phosphoserine mark is found at S2116 and S2135. The segment covering H2145–L2168 has biased composition (basic and acidic residues). Phosphothreonine occurs at positions 2146, 2163, and 2203. Residues I2205–I2400 form a disordered region. S2223 carries the post-translational modification Phosphoserine. 2 positions are modified to phosphothreonine: T2231 and T2233. At S2239 the chain carries Phosphoserine. Phosphothreonine is present on T2259. S2261 carries the phosphoserine modification. Residues T2268, T2285, T2325, T2328, and T2333 each carry the phosphothreonine modification. 5 K167R repeats span residues K2336 to P2447, K2458 to P2569, K2580 to T2688, K2700 to D2805, and K2819 to P2928. S2344 bears the Phosphoserine mark. Phosphothreonine occurs at positions 2352 and 2389. A Phosphoserine modification is found at S2395. T2406 is modified (phosphothreonine). Position 2420 is a phosphoserine (S2420). A phosphothreonine mark is found at T2426 and T2446. Positions Q2445–Q2480 are disordered. Basic and acidic residues predominate over residues H2449–T2460. A compositionally biased stretch (polar residues) spans S2463–S2475. Phosphoserine is present on S2466. K2492 is covalently cross-linked (Glycyl lysine isopeptide (Lys-Gly) (interchain with G-Cter in SUMO1)). The tract at residues A2497 to S2521 is disordered. Positions L2501–E2514 are enriched in polar residues. S2505, S2528, and S2588 each carry phosphoserine. A disordered region spans residues G2570–I3256. Composition is skewed to basic and acidic residues over residues R2609 to A2618, T2632 to K2644, and E2660 to P2675. A Glycyl lysine isopeptide (Lys-Gly) (interchain with G-Cter in SUMO1); alternate cross-link involves residue K2613. K2613 is covalently cross-linked (Glycyl lysine isopeptide (Lys-Gly) (interchain with G-Cter in SUMO2); alternate). S2638 is modified (phosphoserine). Residues L2685–L2696 show a composition bias toward polar residues. Position 2708 is a phosphoserine (S2708). K2734 participates in a covalent cross-link: Glycyl lysine isopeptide (Lys-Gly) (interchain with G-Cter in SUMO1); alternate. A Glycyl lysine isopeptide (Lys-Gly) (interchain with G-Cter in SUMO2); alternate cross-link involves residue K2734. Basic and acidic residues-rich tracts occupy residues D2751–A2770 and H2810–T2821. Phosphoserine occurs at positions 2827, 2828, and 2838. K2852 is covalently cross-linked (Glycyl lysine isopeptide (Lys-Gly) (interchain with G-Cter in SUMO1); alternate). K2852 participates in a covalent cross-link: Glycyl lysine isopeptide (Lys-Gly) (interchain with G-Cter in SUMO2); alternate. Residues T2869–G2881 are compositionally biased toward basic and acidic residues. Residues S2941–D2951 show a composition bias toward polar residues. K2967 is covalently cross-linked (Glycyl lysine isopeptide (Lys-Gly) (interchain with G-Cter in SUMO2)). Polar residues predominate over residues K2982–L2991. An N6-acetyllysine modification is found at K2986. Positions K3029 to G3039 are enriched in basic residues. An ATP-binding site is contributed by A3034–S3041. Residue S3041 is modified to Phosphoserine. Basic and acidic residues-rich tracts occupy residues K3071–Q3080 and E3113–P3124. Phosphoserine is present on S3128. A compositionally biased stretch (basic and acidic residues) spans D3138–R3154. The span at S3207–T3223 shows a compositional bias: polar residues. A compositionally biased stretch (basic and acidic residues) spans R3228–C3241.

As to quaternary structure, interacts with KIF15. Interacts (via the FHA domain) with NIFK. Interacts with PPP1CC. Component of a complex at least composed of ZNF335, HCFC1, CCAR2, EMSY, MKI67, RBBP5, ASH2L and WDR5; the complex is formed as a result of interactions between components of a nuclear receptor-mediated transcription complex and a histone methylation complex. Interacts with ZNF335. Post-translationally, hyperphosphorylated by CDK1 in mitosis; hyperphosphorylatiom prevents undergoing liquid-liquid phase separation. Dephosphorylated by PPP1CC at the onset of anaphase. Dephosphorylated by protein phosphatase 2A (PP2A) at the onset of anaphase. Dephosphorylation by protein phosphatase 2A (PP2A) and simultaneous exposure of the positively charged patch (CP) during mitotic exit induce the RNA-dependent formation of a liquid-like condensed phase on the chromosome surface. In terms of processing, ubiquitinated by the APC/C complex after neuronal progenitors exit mitosis during brain development, leading to clearance from constitutive heterochromatin.

The protein resides in the chromosome. The protein localises to the nucleus. It localises to the nucleolus. Protein that associates with the surface of mitotic chromosomes and acts both as a chromosome repellent during early mitosis and chromosome attractant during late mitosis. Required to maintain individual mitotic chromosomes dispersed in the cytoplasm following nuclear envelope disassembly. During early mitosis, relocalizes from nucleoli to the chromosome surface where it forms extended brush structures that cover a substantial fraction of the chromosome surface. The MKI67 brush structure prevents chromosomes from collapsing into a single chromatin mass by forming a steric and electrostatic charge barrier: the protein has a high net electrical charge and acts as a surfactant, dispersing chromosomes and enabling independent chromosome motility. During mitotic anaphase, the MKI67 brush structure collapses and MKI67 switches from a chromosome repellent to a chromosome attractant to promote chromosome clustering and facilitate the exclusion of large cytoplasmic particles from the future nuclear space. Mechanistically, dephosphorylation during mitotic exit and simultaneous exposure of a conserved basic patch induce the RNA-dependent formation of a liquid-like condensed phase on the chromosome surface, promoting coalescence of neighboring chromosome surfaces and clustering of chromosomes. Binds premature ribosomal RNAs during anaphase; promoting liquid-liquid phase separation. Binds DNA, with a preference for supercoiled DNA and AT-rich DNA. Does not contribute to the internal structure of mitotic chromosomes. May play a role in chromatin organization; it is however unclear whether it plays a direct role in chromatin organization or whether it is an indirect consequence of its function in mitotic chromosome. This Homo sapiens (Human) protein is Proliferation marker protein Ki-67.